Reading from the N-terminus, the 378-residue chain is Queuine tRNA-ribosyltransferase (378 aa).

D89 acts as the Proton acceptor in catalysis. Residues 89-93 (DSGGF), D143, Q194, and G221 contribute to the substrate site. The RNA binding stretch occupies residues 252–258 (GVGTPAN). The active-site Nucleophile is D271. Residues 276–280 (ARNGR) form an RNA binding; important for wobble base 34 recognition region. Residues C309, C311, C314, and H340 each coordinate Zn(2+).

This sequence belongs to the queuine tRNA-ribosyltransferase family. In terms of assembly, homodimer. Within each dimer, one monomer is responsible for RNA recognition and catalysis, while the other monomer binds to the replacement base PreQ1. Requires Zn(2+) as cofactor.

The enzyme catalyses 7-aminomethyl-7-carbaguanine + guanosine(34) in tRNA = 7-aminomethyl-7-carbaguanosine(34) in tRNA + guanine. Its pathway is tRNA modification; tRNA-queuosine biosynthesis. In terms of biological role, catalyzes the base-exchange of a guanine (G) residue with the queuine precursor 7-aminomethyl-7-deazaguanine (PreQ1) at position 34 (anticodon wobble position) in tRNAs with GU(N) anticodons (tRNA-Asp, -Asn, -His and -Tyr). Catalysis occurs through a double-displacement mechanism. The nucleophile active site attacks the C1' of nucleotide 34 to detach the guanine base from the RNA, forming a covalent enzyme-RNA intermediate. The proton acceptor active site deprotonates the incoming PreQ1, allowing a nucleophilic attack on the C1' of the ribose to form the product. After dissociation, two additional enzymatic reactions on the tRNA convert PreQ1 to queuine (Q), resulting in the hypermodified nucleoside queuosine (7-(((4,5-cis-dihydroxy-2-cyclopenten-1-yl)amino)methyl)-7-deazaguanosine). The chain is Queuine tRNA-ribosyltransferase from Lachnoclostridium phytofermentans (strain ATCC 700394 / DSM 18823 / ISDg) (Clostridium phytofermentans).